Reading from the N-terminus, the 177-residue chain is MKLILRADVDALGSLGDIVTVKAGYGRNYLIPQGLAMPASEANLKQFELEKRKLQEMADNLRTQAEGLRDKLAEVEVKIEVRVGEGDKLYGSVTAVNIADALAEMDFDIDRRKILLSDPIRSLGEYDIEIKLHPEVRGEVKLVVAKVGGPVEEEPAEEVEAPAETEVAEDAEEATEA.

The disordered stretch occupies residues 151-177 (VEEEPAEEVEAPAETEVAEDAEEATEA).

The protein belongs to the bacterial ribosomal protein bL9 family.

In terms of biological role, binds to the 23S rRNA. This Maridesulfovibrio salexigens (strain ATCC 14822 / DSM 2638 / NCIMB 8403 / VKM B-1763) (Desulfovibrio salexigens) protein is Large ribosomal subunit protein bL9.